We begin with the raw amino-acid sequence, 188 residues long: MASYGMNDVKNGMKILVNNQPAVIIDTEYVKPGKGQAFTRVKYRLIKDGRTQEVTMKSTDSLDAADVVDTDMNFMYSDGEYWHFMDPESFEQVQATKAGMGGAEKWLKGEESCVVTLWNGEPIFVQPPNFVELKITETDPGVRGDTSGGGGKPATLETGAVVRVPLFVNQDEVIRVDTRSGEYSARVK.

Residue Lys34 is modified to N6-(3,6-diaminohexanoyl)-5-hydroxylysine.

It belongs to the elongation factor P family. In terms of processing, may be beta-lysylated on the epsilon-amino group of Lys-34 by the combined action of EpmA and EpmB, and then hydroxylated on the C5 position of the same residue by EpmC (if this protein is present). Lysylation is critical for the stimulatory effect of EF-P on peptide-bond formation. The lysylation moiety may extend toward the peptidyltransferase center and stabilize the terminal 3-CCA end of the tRNA. Hydroxylation of the C5 position on Lys-34 may allow additional potential stabilizing hydrogen-bond interactions with the P-tRNA.

It is found in the cytoplasm. It functions in the pathway protein biosynthesis; polypeptide chain elongation. In terms of biological role, involved in peptide bond synthesis. Alleviates ribosome stalling that occurs when 3 or more consecutive Pro residues or the sequence PPG is present in a protein, possibly by augmenting the peptidyl transferase activity of the ribosome. Modification of Lys-34 is required for alleviation. The sequence is that of Elongation factor P from Stenotrophomonas maltophilia (strain K279a).